A 234-amino-acid polypeptide reads, in one-letter code: VVGGDECNINEHRFLVAIFNSNGFVCSGTLINQEWVLTAAHCDSTDFQIKLGAHSKKVLNEDEQIRNPKEKFICPNKKNDEVLDKDIMLIKLDSRVSNSEHIAPLSLPSSPPSVGSVCHIMGWGSITPIEVTFPDVPHCAYINLLDDAACQPGYPEVLPEYRTLCAGILEGGKDTCNYDSGGPLICNGQFQGIVSYGAHPCGQSLKPGIYTKVFDYNDWIQSIIAGNTAATCPP.

The region spanning 1 to 225 (VVGGDECNIN…YNDWIQSIIA (225 aa)) is the Peptidase S1 domain. Intrachain disulfides connect cysteine 7-cysteine 139, cysteine 26-cysteine 42, cysteine 74-cysteine 232, cysteine 118-cysteine 186, cysteine 150-cysteine 165, and cysteine 176-cysteine 201. Catalysis depends on charge relay system residues histidine 41 and aspartate 86. The Charge relay system role is filled by serine 180.

As to quaternary structure, monomer. Post-translationally, not glycosylated. As to expression, expressed by the venom gland.

The protein resides in the secreted. With respect to regulation, strongly inhibited by diisopropylfluorophosphate (DFP) and to a lesser extent by PMSF, benzamidine and 4,6-diamidino-2-phenylindole. Low inhibition by hirudin. Its function is as follows. Thrombin-like snake venom serine protease that cleaves beta chain of fibrinogen (FGB), releasing fibrinopeptide B. Has a coagulant activity activating blood coagulation factors V (F5) and XIII (F13A1). The chain is Thrombin-like enzyme contortrixobin from Agkistrodon contortrix contortrix (Southern copperhead).